Here is a 1375-residue protein sequence, read N- to C-terminus: ARF guanine-nucleotide exchange factor GNL2 (1375 aa).

The SEC7 domain occupies 486 to 676 (HIRVRKAQKR…SELFQSIATN (191 aa)). Glutamate 590 is a catalytic residue.

As to quaternary structure, homodimer. Preferentially expressed in mature pollen grains and growing pollen tubes.

Its subcellular location is the cytoplasm. It is found in the cytosol. The protein localises to the membrane. Its function is as follows. Activates the ARF proteins by exchanging bound GDP for free GTP. Plays a role in vesicular protein sorting. Essential for pollen germination. The chain is ARF guanine-nucleotide exchange factor GNL2 (GNL2) from Arabidopsis thaliana (Mouse-ear cress).